The chain runs to 173 residues: Co-chaperone protein HscB homolog (173 aa).

Residues 5–77 form the J domain; sequence CHFALFDLQP…PRRARYLLAI (73 aa).

This sequence belongs to the HscB family. As to quaternary structure, interacts with HscA and stimulates its ATPase activity.

Functionally, co-chaperone involved in the maturation of iron-sulfur cluster-containing proteins. Seems to help targeting proteins to be folded toward HscA. This is Co-chaperone protein HscB homolog from Pseudomonas putida (strain W619).